We begin with the raw amino-acid sequence, 963 residues long: Probable sucrose-phosphate synthase 2 (963 aa).

Residues 111–150 (KLRTDTNADMSEDLFEGEKGEDAGDPSVAYGDSTTGSSPK) form a disordered region.

The protein belongs to the glycosyltransferase 1 family. As to quaternary structure, homodimer or homotetramer. As to expression, expressed in germinating seeds.

The enzyme catalyses beta-D-fructose 6-phosphate + UDP-alpha-D-glucose = sucrose 6(F)-phosphate + UDP + H(+). The protein operates within glycan biosynthesis; sucrose biosynthesis; sucrose from D-fructose 6-phosphate and UDP-alpha-D-glucose: step 1/2. Activity is regulated by phosphorylation and moderated by concentration of metabolites and light. Plays a role in photosynthetic sucrose synthesis by catalyzing the rate-limiting step of sucrose biosynthesis from UDP-glucose and fructose- 6-phosphate. Involved in the regulation of carbon partitioning in the leaves of plants. May regulate the synthesis of sucrose and therefore play a major role as a limiting factor in the export of photoassimilates out of the leaf. Plays a role for sucrose availability that is essential for plant growth and fiber elongation. This is Probable sucrose-phosphate synthase 2 (SPS2) from Oryza sativa subsp. japonica (Rice).